The primary structure comprises 62 residues: MTSILQVALLALIFVSFALVVGVPVVFATPNGWTDNKGAVFSGLSLWLLLVFVVGILNSFVV.

The next 2 helical transmembrane spans lie at 8 to 28 and 41 to 61; these read ALLALIFVSFALVVGVPVVFA and FSGLSLWLLLVFVVGILNSFV.

This sequence belongs to the PsbZ family. As to quaternary structure, PSII is composed of 1 copy each of membrane proteins PsbA, PsbB, PsbC, PsbD, PsbE, PsbF, PsbH, PsbI, PsbJ, PsbK, PsbL, PsbM, PsbT, PsbY, PsbZ, Psb30/Ycf12, at least 3 peripheral proteins of the oxygen-evolving complex and a large number of cofactors. It forms dimeric complexes.

The protein localises to the plastid. It is found in the chloroplast thylakoid membrane. In terms of biological role, controls the interaction of photosystem II (PSII) cores with the light-harvesting antenna, aiding in the dissipation of excitation energy within PSII. PSII is a light-driven water plastoquinone oxidoreductase, using light energy to abstract electrons from H(2)O, generating a proton gradient subsequently used for ATP formation. This is Photosystem II reaction center protein Z from Chlamydomonas reinhardtii (Chlamydomonas smithii).